Consider the following 317-residue polypeptide: Ribosomal protein L11 methyltransferase (317 aa).

4 residues coordinate S-adenosyl-L-methionine: Thr-158, Gly-179, Asp-201, and Asn-244.

The protein belongs to the methyltransferase superfamily. PrmA family.

It localises to the cytoplasm. The enzyme catalyses L-lysyl-[protein] + 3 S-adenosyl-L-methionine = N(6),N(6),N(6)-trimethyl-L-lysyl-[protein] + 3 S-adenosyl-L-homocysteine + 3 H(+). In terms of biological role, methylates ribosomal protein L11. This chain is Ribosomal protein L11 methyltransferase, found in Streptococcus mutans serotype c (strain ATCC 700610 / UA159).